We begin with the raw amino-acid sequence, 247 residues long: 2,3-bisphosphoglycerate-dependent phosphoglycerate mutase (247 aa).

Residues 8–15 (RHGESTWN), 21–22 (TG), Arg-60, 87–90 (ERHY), Lys-98, 114–115 (RR), and 183–184 (GN) contribute to the substrate site. His-9 functions as the Tele-phosphohistidine intermediate in the catalytic mechanism. Glu-87 acts as the Proton donor/acceptor in catalysis.

The protein belongs to the phosphoglycerate mutase family. BPG-dependent PGAM subfamily. Homodimer.

It carries out the reaction (2R)-2-phosphoglycerate = (2R)-3-phosphoglycerate. Its pathway is carbohydrate degradation; glycolysis; pyruvate from D-glyceraldehyde 3-phosphate: step 3/5. Its function is as follows. Catalyzes the interconversion of 2-phosphoglycerate and 3-phosphoglycerate. This chain is 2,3-bisphosphoglycerate-dependent phosphoglycerate mutase, found in Methylibium petroleiphilum (strain ATCC BAA-1232 / LMG 22953 / PM1).